Reading from the N-terminus, the 401-residue chain is Thermophilic serine proteinase (401 aa).

Residues 1–24 (MKFKAIVSLSLAVSMSLFPFLVEA) form the signal peptide. The propeptide occupies 25 to 121 (ASNDGVESPK…AEPNYLFNAA (97 aa)). A Ca(2+)-binding site is contributed by aspartate 126. Residues 133-399 (QYGPQNTYTD…YGRINSYNAV (267 aa)) enclose the Peptidase S8 domain. Aspartate 160 functions as the Charge relay system in the catalytic mechanism. The Ca(2+) site is built by proline 168, aspartate 169, aspartate 171, aspartate 179, aspartate 184, and aspartate 186. Histidine 193 serves as the catalytic Charge relay system. Ca(2+)-binding residues include glutamate 204, asparagine 207, threonine 209, and isoleucine 211. A disulfide bridge links cysteine 258 with cysteine 260. Residues tyrosine 297, valine 300, and aspartate 323 each contribute to the Na(+) site. Serine 347 acts as the Charge relay system in catalysis.

This sequence belongs to the peptidase S8 family. It depends on Ca(2+) as a cofactor. Requires Na(+) as cofactor.

Its subcellular location is the secreted. The polypeptide is Thermophilic serine proteinase (Bacillus sp. (strain AK1)).